Reading from the N-terminus, the 269-residue chain is GTP cyclohydrolase FolE2 (269 aa).

It belongs to the GTP cyclohydrolase IV family.

It catalyses the reaction GTP + H2O = 7,8-dihydroneopterin 3'-triphosphate + formate + H(+). It functions in the pathway cofactor biosynthesis; 7,8-dihydroneopterin triphosphate biosynthesis; 7,8-dihydroneopterin triphosphate from GTP: step 1/1. Converts GTP to 7,8-dihydroneopterin triphosphate. This Burkholderia multivorans (strain ATCC 17616 / 249) protein is GTP cyclohydrolase FolE2.